The following is a 497-amino-acid chain: Arginine/ornithine antiporter ArcD2 (497 aa).

Transmembrane regions (helical) follow at residues 8–28, 41–61, 88–108, 127–147, 160–180, 220–240, 255–275, 297–317, 354–374, 378–398, 406–426, 429–449, and 462–482; these read GISL…GGVF, GGVV…VLSF, FLSG…FAVL, SLTI…MLLV, IVMI…IILF, IKGS…ATMM, VIGL…PYGY, VGGW…LGAW, LLIT…VANA, FIYM…AYLF, SVKN…ALYL, WQYV…FIGA, and WLGM…LICG.

It belongs to the amino acid-polyamine-organocation (APC) superfamily. Basic amino acid/polyamine antiporter (APA) (TC 2.A.3.2) family.

The protein localises to the cell membrane. The enzyme catalyses L-ornithine(in) + L-arginine(out) = L-ornithine(out) + L-arginine(in). Catalyzes electroneutral exchange between L-arginine and L-ornithine. Can also efficiently translocate L-alanine. May function in vivo as a L-arginine/L-alanine exchanger in a pathway together with the arcT gene, which is found adjacent to the arcD2 gene in the ADI gene cluster. The sequence is that of Arginine/ornithine antiporter ArcD2 from Lactococcus lactis subsp. cremoris (strain MG1363).